A 448-amino-acid polypeptide reads, in one-letter code: Trigger factor (448 aa).

In terms of domain architecture, PPIase FKBP-type spans 172-257; sequence GDRVTVDFVG…MKKVEWPHLP (86 aa).

Belongs to the FKBP-type PPIase family. Tig subfamily.

It localises to the cytoplasm. The catalysed reaction is [protein]-peptidylproline (omega=180) = [protein]-peptidylproline (omega=0). Involved in protein export. Acts as a chaperone by maintaining the newly synthesized protein in an open conformation. Functions as a peptidyl-prolyl cis-trans isomerase. The sequence is that of Trigger factor from Burkholderia multivorans (strain ATCC 17616 / 249).